A 149-amino-acid polypeptide reads, in one-letter code: Nucleoside diphosphate kinase (149 aa).

Residues K9, F57, R85, T91, R102, and N112 each coordinate ATP. H115 serves as the catalytic Pros-phosphohistidine intermediate.

The protein belongs to the NDK family. As to quaternary structure, homotetramer. It depends on Mg(2+) as a cofactor.

Its subcellular location is the cytoplasm. The catalysed reaction is a 2'-deoxyribonucleoside 5'-diphosphate + ATP = a 2'-deoxyribonucleoside 5'-triphosphate + ADP. The enzyme catalyses a ribonucleoside 5'-diphosphate + ATP = a ribonucleoside 5'-triphosphate + ADP. Its function is as follows. Major role in the synthesis of nucleoside triphosphates other than ATP. The ATP gamma phosphate is transferred to the NDP beta phosphate via a ping-pong mechanism, using a phosphorylated active-site intermediate. The chain is Nucleoside diphosphate kinase from Carboxydothermus hydrogenoformans (strain ATCC BAA-161 / DSM 6008 / Z-2901).